Here is a 226-residue protein sequence, read N- to C-terminus: UPF0111 protein AF_1799 (226 aa).

Belongs to the UPF0111 family.

The chain is UPF0111 protein AF_1799 from Archaeoglobus fulgidus (strain ATCC 49558 / DSM 4304 / JCM 9628 / NBRC 100126 / VC-16).